We begin with the raw amino-acid sequence, 203 residues long: Histidine biosynthesis bifunctional protein HisIE (203 aa).

Positions 1–114 are phosphoribosyl-AMP cyclohydrolase; the sequence is MLTEQQRREL…FGDTAHQWLF (114 aa). Positions 115–203 are phosphoribosyl-ATP pyrophosphohydrolase; sequence LYQLEQLLAE…VIENLRKRHQ (89 aa).

It in the N-terminal section; belongs to the PRA-CH family. The protein in the C-terminal section; belongs to the PRA-PH family.

The protein localises to the cytoplasm. It carries out the reaction 1-(5-phospho-beta-D-ribosyl)-ATP + H2O = 1-(5-phospho-beta-D-ribosyl)-5'-AMP + diphosphate + H(+). The enzyme catalyses 1-(5-phospho-beta-D-ribosyl)-5'-AMP + H2O = 1-(5-phospho-beta-D-ribosyl)-5-[(5-phospho-beta-D-ribosylamino)methylideneamino]imidazole-4-carboxamide. Its pathway is amino-acid biosynthesis; L-histidine biosynthesis; L-histidine from 5-phospho-alpha-D-ribose 1-diphosphate: step 2/9. It functions in the pathway amino-acid biosynthesis; L-histidine biosynthesis; L-histidine from 5-phospho-alpha-D-ribose 1-diphosphate: step 3/9. The chain is Histidine biosynthesis bifunctional protein HisIE (hisI) from Escherichia coli (strain K12).